The primary structure comprises 436 residues: UPF0597 protein YhaM (436 aa).

The protein belongs to the UPF0597 family.

This is UPF0597 protein YhaM from Salmonella newport (strain SL254).